Reading from the N-terminus, the 887-residue chain is Inter-alpha-trypsin inhibitor heavy chain H3 (887 aa).

The N-terminal stretch at 1–21 (MVTLWWPCLVLALLSGLETSG) is a signal peptide. The propeptide occupies 22–33 (FPRSPLRLLGKR). The region spanning 29-158 (LLGKRSLPEG…KVIFELTYEE (130 aa)) is the VIT domain. Asparagine 91 is a glycosylation site (N-linked (GlcNAc...) asparagine). In terms of domain architecture, VWFA spans 282 to 442 (PKNIAFVIDV…YNFLESLALE (161 aa)). N-linked (GlcNAc...) asparagine glycosylation is present at asparagine 580. Aspartate 647 is subject to Aspartate 1-(chondroitin 4-sulfate)-ester. Residues 648–887 (PHFIIQVPGK…HTDYIVPSLF (240 aa)) constitute a propeptide that is removed on maturation.

The protein belongs to the ITIH family. As to quaternary structure, I-alpha-I plasma protease inhibitors are assembled from one or two heavy chains (HC) and one light chain, bikunin. Pre-alpha-inhibitor (P-alpha-I) is composed of ITIH3/HC3 and bikunin. In terms of processing, heavy chains are linked to bikunin via chondroitin 4-sulfate esterified to the alpha-carboxyl of the C-terminal aspartate after propeptide cleavage.

The protein resides in the secreted. In terms of biological role, may act as a carrier of hyaluronan in serum or as a binding protein between hyaluronan and other matrix protein, including those on cell surfaces in tissues to regulate the localization, synthesis and degradation of hyaluronan which are essential to cells undergoing biological processes. In Rattus norvegicus (Rat), this protein is Inter-alpha-trypsin inhibitor heavy chain H3 (Itih3).